We begin with the raw amino-acid sequence, 225 residues long: MASTALSTASNPTQLCRSRASLGKPVKGLGFGRERVPRTATTITCQAASSIPADRVPDMGKRQLMNLLLLGAISLPTVGMLVPYGAFFIPAGSGNAGGGQVAKDKLGNDVLAEEWLKTHGPNDRTLTQGLKGDPTYLVVEADKTLATYGINAVCTHLGCVVPWNAAENKFICPCHGSQYNNQGRVVRGPAPLSLALVHADVDDGKVLFVPWVETDFRTGDNPWWA.

The transit peptide at 1 to 46 directs the protein to the chloroplast; the sequence is MASTALSTASNPTQLCRSRASLGKPVKGLGFGRERVPRTATTITCQ. A helical transmembrane segment spans residues 69-89; the sequence is LLGAISLPTVGMLVPYGAFFI. The 97-residue stretch at 112–208 folds into the Rieske domain; that stretch reads AEEWLKTHGP…ADVDDGKVLF (97 aa). The [2Fe-2S] cluster site is built by Cys-154, His-156, Cys-172, and His-175. Cys-159 and Cys-174 are disulfide-bonded.

The protein belongs to the Rieske iron-sulfur protein family. As to quaternary structure, the 4 large subunits of the cytochrome b6-f complex are cytochrome b6, subunit IV (17 kDa polypeptide, petD), cytochrome f and the Rieske protein, while the 4 small subunits are petG, petL, petM and petN. The complex functions as a dimer. The cofactor is [2Fe-2S] cluster.

It localises to the plastid. Its subcellular location is the chloroplast thylakoid membrane. It carries out the reaction 2 oxidized [plastocyanin] + a plastoquinol + 2 H(+)(in) = 2 reduced [plastocyanin] + a plastoquinone + 4 H(+)(out). Functionally, component of the cytochrome b6-f complex, which mediates electron transfer between photosystem II (PSII) and photosystem I (PSI), cyclic electron flow around PSI, and state transitions. The polypeptide is Cytochrome b6-f complex iron-sulfur subunit, chloroplastic (petC) (Oryza sativa subsp. japonica (Rice)).